The chain runs to 306 residues: Ornithine carbamoyltransferase, anabolic (306 aa).

Carbamoyl phosphate contacts are provided by residues 46-49, Q73, R97, and 124-127; these read STRT and HPTQ. L-ornithine-binding positions include N156, D220, and 224–225; that span reads SM. Residues 260–261 and R288 each bind carbamoyl phosphate; that span reads CL.

It belongs to the aspartate/ornithine carbamoyltransferase superfamily. OTCase family. In terms of assembly, homohexamer; dimer of trimers.

It localises to the cytoplasm. It catalyses the reaction carbamoyl phosphate + L-ornithine = L-citrulline + phosphate + H(+). Its pathway is amino-acid biosynthesis; L-arginine biosynthesis; L-arginine from L-ornithine and carbamoyl phosphate: step 1/3. In terms of biological role, reversibly catalyzes the transfer of the carbamoyl group from carbamoyl phosphate (CP) to the N(epsilon) atom of ornithine (ORN) to produce L-citrulline, which is a substrate for argininosuccinate synthetase (ArgG) involved in the final step in arginine biosynthesis. This chain is Ornithine carbamoyltransferase, anabolic, found in Campylobacter jejuni subsp. jejuni serotype O:2 (strain ATCC 700819 / NCTC 11168).